Consider the following 344-residue polypeptide: Holliday junction branch migration complex subunit RuvB (344 aa).

Residues 1 to 180 form a large ATPase domain (RuvB-L) region; that stretch reads MSRIVSGEAQ…FGIPVRLEFY (180 aa). Positions 19, 20, 61, 64, 65, 66, 170, 180, and 217 each coordinate ATP. Residue T65 coordinates Mg(2+). A small ATPAse domain (RuvB-S) region spans residues 181-251; it reads THDELARVLL…AAAAALARLD (71 aa). The tract at residues 254–344 is head domain (RuvB-H); the sequence is EVGLDALDRR…AAPPADLFDK (91 aa). Residues R290, R309, and R314 each contribute to the DNA site.

It belongs to the RuvB family. As to quaternary structure, homohexamer. Forms an RuvA(8)-RuvB(12)-Holliday junction (HJ) complex. HJ DNA is sandwiched between 2 RuvA tetramers; dsDNA enters through RuvA and exits via RuvB. An RuvB hexamer assembles on each DNA strand where it exits the tetramer. Each RuvB hexamer is contacted by two RuvA subunits (via domain III) on 2 adjacent RuvB subunits; this complex drives branch migration. In the full resolvosome a probable DNA-RuvA(4)-RuvB(12)-RuvC(2) complex forms which resolves the HJ.

It localises to the cytoplasm. The catalysed reaction is ATP + H2O = ADP + phosphate + H(+). In terms of biological role, the RuvA-RuvB-RuvC complex processes Holliday junction (HJ) DNA during genetic recombination and DNA repair, while the RuvA-RuvB complex plays an important role in the rescue of blocked DNA replication forks via replication fork reversal (RFR). RuvA specifically binds to HJ cruciform DNA, conferring on it an open structure. The RuvB hexamer acts as an ATP-dependent pump, pulling dsDNA into and through the RuvAB complex. RuvB forms 2 homohexamers on either side of HJ DNA bound by 1 or 2 RuvA tetramers; 4 subunits per hexamer contact DNA at a time. Coordinated motions by a converter formed by DNA-disengaged RuvB subunits stimulates ATP hydrolysis and nucleotide exchange. Immobilization of the converter enables RuvB to convert the ATP-contained energy into a lever motion, pulling 2 nucleotides of DNA out of the RuvA tetramer per ATP hydrolyzed, thus driving DNA branch migration. The RuvB motors rotate together with the DNA substrate, which together with the progressing nucleotide cycle form the mechanistic basis for DNA recombination by continuous HJ branch migration. Branch migration allows RuvC to scan DNA until it finds its consensus sequence, where it cleaves and resolves cruciform DNA. This Phenylobacterium zucineum (strain HLK1) protein is Holliday junction branch migration complex subunit RuvB.